The sequence spans 38 residues: Large ribosomal subunit protein bL36 (38 aa).

The protein belongs to the bacterial ribosomal protein bL36 family.

This chain is Large ribosomal subunit protein bL36, found in Kosmotoga olearia (strain ATCC BAA-1733 / DSM 21960 / TBF 19.5.1).